Consider the following 995-residue polypeptide: S1 RNA-binding domain-containing protein 1 (995 aa).

A disordered region spans residues 23–81 (SFSELSSASEEDDKEDSAWEPQKKVPRSRKQPPPKESKPKRMPRVKKNAPQISDGSEVV). Glycyl lysine isopeptide (Lys-Gly) (interchain with G-Cter in SUMO2) cross-links involve residues lysine 84 and lysine 134. The disordered stretch occupies residues 120–165 (CAAQPHTVRRTKKLKVEEETSKASNLEGESNSSETPSTSTVWGGTC). The span at 146 to 159 (EGESNSSETPSTST) shows a compositional bias: low complexity. Residues lysine 166, lysine 167, and lysine 183 each participate in a glycyl lysine isopeptide (Lys-Gly) (interchain with G-Cter in SUMO2) cross-link. Lysine 185 is covalently cross-linked (Glycyl lysine isopeptide (Lys-Gly) (interchain with G-Cter in SUMO1); alternate). Lysine 185 is covalently cross-linked (Glycyl lysine isopeptide (Lys-Gly) (interchain with G-Cter in SUMO2); alternate). The stretch at 258–288 (ADSLREVQQTLEELRAVAKKVHSTIQKIKKE) forms a coiled coil. At serine 861 the chain carries Phosphoserine. Residues 919-992 (GTVLTGKVEN…PRSRITLDLI (74 aa)) form the S1 motif domain. Lysine 955 participates in a covalent cross-link: Glycyl lysine isopeptide (Lys-Gly) (interchain with G-Cter in SUMO2). At serine 964 the chain carries Phosphoserine.

The chain is S1 RNA-binding domain-containing protein 1 (SRBD1) from Homo sapiens (Human).